The sequence spans 376 residues: 2-hydroxypropyl-CoM lyase (376 aa).

Zn(2+)-binding residues include His218, Cys220, and Cys341.

This sequence belongs to the vitamin-B12 independent methionine synthase family. Homohexamer. Component I of the aliphatic epoxide carboxylation complex together with components II, III and IV. It depends on Zn(2+) as a cofactor.

The enzyme catalyses (R)-2-hydroxypropyl-coenzyme M = (R)-1,2-epoxypropane + coenzyme M. The catalysed reaction is (S)-2-hydroxypropyl-coenzyme M = (S)-1,2-epoxypropane + coenzyme M. Its pathway is alkene metabolism; propylene degradation. Its activity is regulated as follows. Inhibited by methylepoxypropane. Inhibited by the zinc chelator 4-(2-pyridylazo)resorcinol (PAR), in the presence of p- (hydroxymercuri)benzenesulfonic acid (PMPS), and by EDTA. Not inhibited by the coenzyme M analog 2-bromoethanesulfonate (BES). In terms of biological role, involved in aliphatic epoxide carboxylation. Catalyzes the addition of coenzyme M (CoM) to either R- or S-epoxypropane to form the thioether conjugate 2-hydroxypropyl-CoM. Catalyzes the reaction of CoM with R-epoxypropane at a rate approximately twice of that with S-epoxypropane. The CoM analogs 2-mercaptopropionate, 2-mercaptoethanol and cysteine substitute poorly for CoM as the thiol substrate. The chain is 2-hydroxypropyl-CoM lyase from Xanthobacter autotrophicus (strain ATCC BAA-1158 / Py2).